Here is a 382-residue protein sequence, read N- to C-terminus: Galactokinase (382 aa).

Residue 34–37 (EHTD) participates in substrate binding. 124 to 130 (GAGLSSS) is a binding site for ATP. Positions 130 and 162 each coordinate Mg(2+). Catalysis depends on D174, which acts as the Proton acceptor. Residue Y223 coordinates substrate.

This sequence belongs to the GHMP kinase family. GalK subfamily.

The protein localises to the cytoplasm. It catalyses the reaction alpha-D-galactose + ATP = alpha-D-galactose 1-phosphate + ADP + H(+). Its pathway is carbohydrate metabolism; galactose metabolism. In terms of biological role, catalyzes the transfer of the gamma-phosphate of ATP to D-galactose to form alpha-D-galactose-1-phosphate (Gal-1-P). This Escherichia coli O9:H4 (strain HS) protein is Galactokinase.